A 169-amino-acid polypeptide reads, in one-letter code: Ecotin (169 aa).

The signal sequence occupies residues Met1–Ala21. Cys76 and Cys113 are joined by a disulfide.

This sequence belongs to the protease inhibitor I11 (ecotin) family. Homodimer.

The protein resides in the periplasm. Functionally, general inhibitor of pancreatic serine proteases: inhibits chymotrypsin, trypsin, elastases, factor X, kallikrein as well as a variety of other proteases. This chain is Ecotin, found in Yersinia pseudotuberculosis serotype O:1b (strain IP 31758).